Consider the following 93-residue polypeptide: Putative membrane protein insertion efficiency factor (93 aa).

Residues V72–E93 are disordered. Residues P82–E93 are compositionally biased toward basic residues.

Belongs to the UPF0161 family.

Its subcellular location is the cell membrane. Its function is as follows. Could be involved in insertion of integral membrane proteins into the membrane. This is Putative membrane protein insertion efficiency factor from Deinococcus geothermalis (strain DSM 11300 / CIP 105573 / AG-3a).